A 206-amino-acid chain; its full sequence is MARYTGATCRLCRREGLKLFLKGDRCYTDKCAFARRGYAPGQHGQSRKKVSNYGLQLREKQKAKRIYGILERQFRGYYEEADRRRGITGENLLRLLEMRLDNVVYRLGYGNSRTEARQLVTHGHFLVNGKKVDIPSYQVSANDVITVCDKSKATEKFKTFAENPKTLPAWLSGNVEGFEGKVERQPAREDIDVPVNETLIVELYSK.

The 67-residue stretch at methionine 98–proline 164 folds into the S4 RNA-binding domain.

It belongs to the universal ribosomal protein uS4 family. As to quaternary structure, part of the 30S ribosomal subunit. Contacts protein S5. The interaction surface between S4 and S5 is involved in control of translational fidelity.

One of the primary rRNA binding proteins, it binds directly to 16S rRNA where it nucleates assembly of the body of the 30S subunit. Functionally, with S5 and S12 plays an important role in translational accuracy. The chain is Small ribosomal subunit protein uS4A from Clostridium botulinum (strain ATCC 19397 / Type A).